A 363-amino-acid polypeptide reads, in one-letter code: NAD(P)H-quinone oxidoreductase subunit 1, chloroplastic (363 aa).

The next 8 helical transmembrane spans lie at 30–50, 98–118, 127–147, 165–185, 203–223, 248–268, 300–320, and 336–356; these read LVPIVTLVLGITIGVLVIVWL, FSIGPSIAVISIFLSYSVIPF, LSIGVFFWIAISSIAPVGLLM, AAQSISYEIPLALCVLSISLL, FWGWNLWRQPIGFIVFLISSL, YSGIKFGLFYIASYLNLLVSS, VFGTLIGIFITLAKTYLFLFI, and LLNLGWKFLLPISLGNLLLTT.

It belongs to the complex I subunit 1 family. In terms of assembly, NDH is composed of at least 16 different subunits, 5 of which are encoded in the nucleus.

The protein resides in the plastid. The protein localises to the chloroplast thylakoid membrane. It carries out the reaction a plastoquinone + NADH + (n+1) H(+)(in) = a plastoquinol + NAD(+) + n H(+)(out). The catalysed reaction is a plastoquinone + NADPH + (n+1) H(+)(in) = a plastoquinol + NADP(+) + n H(+)(out). NDH shuttles electrons from NAD(P)H:plastoquinone, via FMN and iron-sulfur (Fe-S) centers, to quinones in the photosynthetic chain and possibly in a chloroplast respiratory chain. The immediate electron acceptor for the enzyme in this species is believed to be plastoquinone. Couples the redox reaction to proton translocation, and thus conserves the redox energy in a proton gradient. The protein is NAD(P)H-quinone oxidoreductase subunit 1, chloroplastic of Solanum bulbocastanum (Wild potato).